The chain runs to 93 residues: Regulatory protein RepI (93 aa).

Functionally, this protein is involved in regulating the plasmid copy-number. Increasing the level of this protein results in a higher plasmid copy-number. The sequence is that of Regulatory protein RepI (repI) from Escherichia coli.